Here is a 248-residue protein sequence, read N- to C-terminus: Type III pantothenate kinase (248 aa).

8–15 (DAGNTRTK) is an ATP binding site. Residues Tyr-87 and 94-97 (GVDR) each bind substrate. Catalysis depends on Asp-96, which acts as the Proton acceptor. Thr-119 provides a ligand contact to ATP. Thr-173 is a binding site for substrate.

Belongs to the type III pantothenate kinase family. As to quaternary structure, homodimer. Requires NH4(+) as cofactor. K(+) serves as cofactor.

The protein resides in the cytoplasm. It carries out the reaction (R)-pantothenate + ATP = (R)-4'-phosphopantothenate + ADP + H(+). The protein operates within cofactor biosynthesis; coenzyme A biosynthesis; CoA from (R)-pantothenate: step 1/5. Catalyzes the phosphorylation of pantothenate (Pan), the first step in CoA biosynthesis. This is Type III pantothenate kinase from Methylobacillus flagellatus (strain ATCC 51484 / DSM 6875 / VKM B-1610 / KT).